The following is a 113-amino-acid chain: Large ribosomal subunit protein eL36z (113 aa).

Residues 78–88 (RKLGTHKRAKR) show a composition bias toward basic residues. The tract at residues 78 to 113 (RKLGTHKRAKRKREEMSSVLRKMRSLGGAAAAEKKM) is disordered.

It belongs to the eukaryotic ribosomal protein eL36 family.

In Arabidopsis thaliana (Mouse-ear cress), this protein is Large ribosomal subunit protein eL36z (RPL36A).